The primary structure comprises 340 residues: Glyceraldehyde-3-phosphate dehydrogenase (340 aa).

NAD(+) contacts are provided by residues 11–12 and Gly109; that span reads TI. Cysteines 123 and 149 form a disulfide. Position 138–140 (138–140) interacts with D-glyceraldehyde 3-phosphate; the sequence is SCN. The active-site Nucleophile is Cys139. Arg167 lines the NAD(+) pocket. D-glyceraldehyde 3-phosphate is bound at residue 193-194; the sequence is HA. NAD(+) is bound at residue Gln300.

The protein belongs to the glyceraldehyde-3-phosphate dehydrogenase family. Homotetramer.

The protein localises to the cytoplasm. The catalysed reaction is D-glyceraldehyde 3-phosphate + phosphate + NADP(+) = (2R)-3-phospho-glyceroyl phosphate + NADPH + H(+). It catalyses the reaction D-glyceraldehyde 3-phosphate + phosphate + NAD(+) = (2R)-3-phospho-glyceroyl phosphate + NADH + H(+). It participates in carbohydrate degradation; glycolysis; pyruvate from D-glyceraldehyde 3-phosphate: step 1/5. Functionally, can use both NAD and NADP as cofactors, but exhibits a marked preference for NADP. This is Glyceraldehyde-3-phosphate dehydrogenase (gap) from Saccharolobus solfataricus (strain ATCC 35092 / DSM 1617 / JCM 11322 / P2) (Sulfolobus solfataricus).